Here is a 118-residue protein sequence, read N- to C-terminus: Large ribosomal subunit protein bL19 (118 aa).

The protein belongs to the bacterial ribosomal protein bL19 family.

In terms of biological role, this protein is located at the 30S-50S ribosomal subunit interface and may play a role in the structure and function of the aminoacyl-tRNA binding site. The sequence is that of Large ribosomal subunit protein bL19 from Campylobacter hominis (strain ATCC BAA-381 / DSM 21671 / CCUG 45161 / LMG 19568 / NCTC 13146 / CH001A).